Consider the following 467-residue polypeptide: tRNA(Ile)-lysidine synthase (467 aa).

Residue 26–31 participates in ATP binding; the sequence is SGGPDS.

The protein belongs to the tRNA(Ile)-lysidine synthase family.

The protein resides in the cytoplasm. It catalyses the reaction cytidine(34) in tRNA(Ile2) + L-lysine + ATP = lysidine(34) in tRNA(Ile2) + AMP + diphosphate + H(+). In terms of biological role, ligates lysine onto the cytidine present at position 34 of the AUA codon-specific tRNA(Ile) that contains the anticodon CAU, in an ATP-dependent manner. Cytidine is converted to lysidine, thus changing the amino acid specificity of the tRNA from methionine to isoleucine. The chain is tRNA(Ile)-lysidine synthase from Clostridium tetani (strain Massachusetts / E88).